The chain runs to 394 residues: Flavohemoprotein (394 aa).

The Globin domain maps to 1–136 (MLSENTINIV…LANVFIQREE (136 aa)). Histidine 85 is a binding site for heme b. Catalysis depends on charge relay system residues tyrosine 95 and glutamate 135. Residues 147–394 (GGWRGLREFE…YECFGPHKVV (248 aa)) are reductase. The FAD-binding FR-type domain maps to 150–255 (RGLREFELVE…AAPAGDFFLD (106 aa)). Residues tyrosine 188 and 204-207 (RQYS) each bind FAD. 268 to 273 (GVGLTP) serves as a coordination point for NADP(+). 387-390 (CFGP) is a binding site for FAD.

Belongs to the globin family. Two-domain flavohemoproteins subfamily. The protein in the C-terminal section; belongs to the flavoprotein pyridine nucleotide cytochrome reductase family. Heme b serves as cofactor. The cofactor is FAD.

It catalyses the reaction 2 nitric oxide + NADPH + 2 O2 = 2 nitrate + NADP(+) + H(+). It carries out the reaction 2 nitric oxide + NADH + 2 O2 = 2 nitrate + NAD(+) + H(+). In terms of biological role, is involved in NO detoxification in an aerobic process, termed nitric oxide dioxygenase (NOD) reaction that utilizes O(2) and NAD(P)H to convert NO to nitrate, which protects the bacterium from various noxious nitrogen compounds. Therefore, plays a central role in the inducible response to nitrosative stress. The polypeptide is Flavohemoprotein (Vibrio vulnificus (strain CMCP6)).